The following is a 220-amino-acid chain: Ribose-5-phosphate isomerase A (220 aa).

Residues Thr-28–Thr-31, Asp-81–Asp-84, and Lys-94–Gly-97 each bind substrate. The Proton acceptor role is filled by Glu-103. Residue Lys-121 coordinates substrate.

It belongs to the ribose 5-phosphate isomerase family. Homodimer.

It carries out the reaction aldehydo-D-ribose 5-phosphate = D-ribulose 5-phosphate. It functions in the pathway carbohydrate degradation; pentose phosphate pathway; D-ribose 5-phosphate from D-ribulose 5-phosphate (non-oxidative stage): step 1/1. Catalyzes the reversible conversion of ribose-5-phosphate to ribulose 5-phosphate. This chain is Ribose-5-phosphate isomerase A, found in Shewanella baltica (strain OS223).